The sequence spans 156 residues: Transthyretin-like protein 1 (156 aa).

The N-terminal stretch at 1-17 is a signal peptide; the sequence is MKIALSFLFLTSTFSNA. N-linked (GlcNAc...) asparagine glycosylation occurs at N151.

This sequence belongs to the nematode transthyretin-like family.

The protein localises to the secreted. The protein is Transthyretin-like protein 1 (ttr-1) of Caenorhabditis elegans.